The primary structure comprises 480 residues: UDP-N-acetylmuramoylalanine--D-glutamate ligase (480 aa).

Position 110-116 (110-116) interacts with ATP; that stretch reads GTNGKST.

It belongs to the MurCDEF family.

The protein resides in the cytoplasm. It catalyses the reaction UDP-N-acetyl-alpha-D-muramoyl-L-alanine + D-glutamate + ATP = UDP-N-acetyl-alpha-D-muramoyl-L-alanyl-D-glutamate + ADP + phosphate + H(+). It functions in the pathway cell wall biogenesis; peptidoglycan biosynthesis. Functionally, cell wall formation. Catalyzes the addition of glutamate to the nucleotide precursor UDP-N-acetylmuramoyl-L-alanine (UMA). This Synechococcus sp. (strain JA-2-3B'a(2-13)) (Cyanobacteria bacterium Yellowstone B-Prime) protein is UDP-N-acetylmuramoylalanine--D-glutamate ligase.